The sequence spans 258 residues: Imidazole glycerol phosphate synthase subunit HisF (258 aa).

Residues Asp11 and Asp130 contribute to the active site.

The protein belongs to the HisA/HisF family. Heterodimer of HisH and HisF.

The protein localises to the cytoplasm. It carries out the reaction 5-[(5-phospho-1-deoxy-D-ribulos-1-ylimino)methylamino]-1-(5-phospho-beta-D-ribosyl)imidazole-4-carboxamide + L-glutamine = D-erythro-1-(imidazol-4-yl)glycerol 3-phosphate + 5-amino-1-(5-phospho-beta-D-ribosyl)imidazole-4-carboxamide + L-glutamate + H(+). It participates in amino-acid biosynthesis; L-histidine biosynthesis; L-histidine from 5-phospho-alpha-D-ribose 1-diphosphate: step 5/9. IGPS catalyzes the conversion of PRFAR and glutamine to IGP, AICAR and glutamate. The HisF subunit catalyzes the cyclization activity that produces IGP and AICAR from PRFAR using the ammonia provided by the HisH subunit. In Baumannia cicadellinicola subsp. Homalodisca coagulata, this protein is Imidazole glycerol phosphate synthase subunit HisF.